The sequence spans 179 residues: Putative cleavage and polyadenylation specificity factor subunit 4-like protein (179 aa).

5 consecutive C3H1-type zinc fingers follow at residues 35–61 (KSAS…RHDR), 62–89 (GEKM…HQYD), 90–117 (LTRM…HVKP), 118–145 (AFKS…HVPR), and 146–169 (IMCL…QKIR).

This sequence belongs to the CPSF4/YTH1 family.

The chain is Putative cleavage and polyadenylation specificity factor subunit 4-like protein (CPSF4L) from Homo sapiens (Human).